Reading from the N-terminus, the 257-residue chain is Global transcriptional regulator CodY (257 aa).

The segment at 1-155 (MSLLSKTREL…AATVIGMEIL (155 aa)) is GAF domain. Residues 203–222 (ASKVADRVGITRSVIVNALR) constitute a DNA-binding region (H-T-H motif).

Belongs to the CodY family.

It is found in the cytoplasm. Functionally, DNA-binding global transcriptional regulator which is involved in the adaptive response to starvation and acts by directly or indirectly controlling the expression of numerous genes in response to nutrient availability. During rapid exponential growth, CodY is highly active and represses genes whose products allow adaptation to nutrient depletion. The chain is Global transcriptional regulator CodY from Staphylococcus saprophyticus subsp. saprophyticus (strain ATCC 15305 / DSM 20229 / NCIMB 8711 / NCTC 7292 / S-41).